Here is a 379-residue protein sequence, read N- to C-terminus: Queuine tRNA-ribosyltransferase (379 aa).

The Proton acceptor role is filled by Asp94. Substrate is bound by residues 94–98, Asp148, Gln191, and Gly218; that span reads DSGGF. The RNA binding stretch occupies residues 249 to 255; sequence GVGSPDS. Asp268 acts as the Nucleophile in catalysis. Residues 273–277 form an RNA binding; important for wobble base 34 recognition region; the sequence is TRIAR. Residues Cys306, Cys308, Cys311, and His337 each contribute to the Zn(2+) site.

This sequence belongs to the queuine tRNA-ribosyltransferase family. As to quaternary structure, homodimer. Within each dimer, one monomer is responsible for RNA recognition and catalysis, while the other monomer binds to the replacement base PreQ1. Zn(2+) is required as a cofactor.

It carries out the reaction 7-aminomethyl-7-carbaguanine + guanosine(34) in tRNA = 7-aminomethyl-7-carbaguanosine(34) in tRNA + guanine. Its pathway is tRNA modification; tRNA-queuosine biosynthesis. Its function is as follows. Catalyzes the base-exchange of a guanine (G) residue with the queuine precursor 7-aminomethyl-7-deazaguanine (PreQ1) at position 34 (anticodon wobble position) in tRNAs with GU(N) anticodons (tRNA-Asp, -Asn, -His and -Tyr). Catalysis occurs through a double-displacement mechanism. The nucleophile active site attacks the C1' of nucleotide 34 to detach the guanine base from the RNA, forming a covalent enzyme-RNA intermediate. The proton acceptor active site deprotonates the incoming PreQ1, allowing a nucleophilic attack on the C1' of the ribose to form the product. After dissociation, two additional enzymatic reactions on the tRNA convert PreQ1 to queuine (Q), resulting in the hypermodified nucleoside queuosine (7-(((4,5-cis-dihydroxy-2-cyclopenten-1-yl)amino)methyl)-7-deazaguanosine). The sequence is that of Queuine tRNA-ribosyltransferase from Bacillus anthracis (strain CDC 684 / NRRL 3495).